A 186-amino-acid polypeptide reads, in one-letter code: Small ribosomal subunit protein uS5 (186 aa).

One can recognise an S5 DRBM domain in the interval 20-83; sequence FVDKLVHINR…EAAKRDMIFV (64 aa).

This sequence belongs to the universal ribosomal protein uS5 family. In terms of assembly, part of the 30S ribosomal subunit. Contacts proteins S4 and S8.

Functionally, with S4 and S12 plays an important role in translational accuracy. In terms of biological role, located at the back of the 30S subunit body where it stabilizes the conformation of the head with respect to the body. This chain is Small ribosomal subunit protein uS5, found in Brucella abortus (strain S19).